The chain runs to 676 residues: Zinc finger CCCH domain-containing protein 38 (676 aa).

5 disordered regions span residues 1-134 (MEMS…DHLF), 172-217 (SSDY…RSSN), 245-307 (RKQP…SWID), 487-506 (SVQP…NPNQ), and 533-594 (IQEV…DPKG). Over residues 12–21 (SKWDSKEDTH) the composition is skewed to basic and acidic residues. Polar residues predominate over residues 58–79 (RVSQNNDNSYFSEQDGTRQQFV). Basic and acidic residues-rich tracts occupy residues 101-110 (ARRDAGSYDR), 124-134 (EFNKRGSDHLF), and 192-212 (SEFT…EGGF). The segment at 214 to 243 (RSSNIPCKFFAAGTGFCRNGKYCRFSHHVA) adopts a C3H1-type zinc-finger fold. Over residues 251 to 262 (NNNNFYRQDNNN) the composition is skewed to low complexity. The segment covering 269 to 278 (KWNDVERLDN) has biased composition (basic and acidic residues). Residues 538–562 (LDPKENGDKKTDEASKEEEGKKTGE) are compositionally biased toward basic and acidic residues. Residues 563–583 (DTNDAENVVDEDEDGDDDGSD) are compositionally biased toward acidic residues. Residues 584–594 (EENKKEKDPKG) show a composition bias toward basic and acidic residues.

The polypeptide is Zinc finger CCCH domain-containing protein 38 (Arabidopsis thaliana (Mouse-ear cress)).